Reading from the N-terminus, the 414-residue chain is MVKVEVLGMILAGGQGSRLYPLTAKRAKPAVPFGAKYRIIDFVLNNFVNSGIYAIYVLTQYKAQSLTEHIQRYWRFGAFLEDHFILLVPAQMYRYEELGPVWYRGTADAIYQNLHLVHNHAPKAVAVFGGDHIFKMNIRHMVEYHYDTRADITIAAYPVPVAEATRFGVLQVDEEWRITEFQEKPEEPKPIPGRPDMALASMGNYIFRTEALFELLEADARDETSAHDFGKDVIPRALREGYRVYAYDFHRNPIPGQEGPNLYWRDVGTLDAYYEASMDLVKVVPEFDLFNPEWPLRTANLFSPPAKFVHETGERVGRALNSLLAGGVIVSGGTVRESVLFRRVRVNSYSLVERSVLFDDVEVGRYCRIRNAIIDKNVKIPPHTEIGYDLELDRARGFTVTPEGVVVVPKGYRF.

Residues tyrosine 103, glycine 168, 183 to 184 (EK), and serine 201 contribute to the alpha-D-glucose 1-phosphate site.

Belongs to the bacterial/plant glucose-1-phosphate adenylyltransferase family. In terms of assembly, homotetramer.

It carries out the reaction alpha-D-glucose 1-phosphate + ATP + H(+) = ADP-alpha-D-glucose + diphosphate. The protein operates within glycan biosynthesis; glycogen biosynthesis. Functionally, involved in the biosynthesis of ADP-glucose, a building block required for the elongation reactions to produce glycogen. Catalyzes the reaction between ATP and alpha-D-glucose 1-phosphate (G1P) to produce pyrophosphate and ADP-Glc. This Thermus thermophilus (strain ATCC 27634 / DSM 579 / HB8) protein is Glucose-1-phosphate adenylyltransferase.